Reading from the N-terminus, the 283-residue chain is Cyclin-C (283 aa).

The 99-residue stretch at 46–144 folds into the Cyclin N-terminal domain; sequence NVIQALGEHL…ILECEFYLLE (99 aa). Residues 252–283 form a disordered region; it reads SILSKMPKPKPPPNSDGEQGTNGSQSSGYSQS. The span at 267–283 shows a compositional bias: polar residues; it reads DGEQGTNGSQSSGYSQS.

Belongs to the cyclin family. Cyclin C subfamily. As to quaternary structure, component of the Mediator complex. The cylin/CDK pair formed by ccnc/cdk8 also associates with the large subunit of RNA polymerase II.

The protein resides in the nucleus. Its function is as follows. Component of the Mediator complex, a coactivator involved in regulated gene transcription of nearly all RNA polymerase II-dependent genes. Mediator functions as a bridge to convey information from gene-specific regulatory proteins to the basal RNA polymerase II transcription machinery. Mediator is recruited to promoters by direct interactions with regulatory proteins and serves as a scaffold for the assembly of a functional preinitiation complex with RNA polymerase II and the general transcription factors. Binds to and activates cyclin-dependent kinase cdk8 that phosphorylates the CTD (C-terminal domain) of the large subunit of RNA polymerase II (RNAp II), which may inhibit the formation of a transcription initiation complex. The sequence is that of Cyclin-C (ccnc) from Xenopus laevis (African clawed frog).